The following is a 401-amino-acid chain: Chalcone synthase 5 (401 aa).

Cys-168 is an active-site residue.

It belongs to the thiolase-like superfamily. Chalcone/stilbene synthases family.

It catalyses the reaction (E)-4-coumaroyl-CoA + 3 malonyl-CoA + 3 H(+) = 2',4,4',6'-tetrahydroxychalcone + 3 CO2 + 4 CoA. Its pathway is secondary metabolite biosynthesis; flavonoid biosynthesis. Its function is as follows. The primary product of this enzyme is 4,2',4',6'-tetrahydroxychalcone (also termed naringenin-chalcone or chalcone) which can under specific conditions spontaneously isomerize into naringenin. This is Chalcone synthase 5 (CHS5) from Sorghum bicolor (Sorghum).